A 208-amino-acid chain; its full sequence is Sodium/potassium-transporting ATPase subunit beta-1-interacting protein 2 (208 aa).

A run of 4 helical transmembrane segments spans residues 1–23 (MGYCSGRCTLIFICGMQLVCVLE), 35–55 (APILANFVHIIIVILGLFGTI), 64–84 (GYAVWLVLWVTWNVFVICFYL), and 148–168 (VAHSSLQIVLALAGFIYACYV).

The protein belongs to the NKAIN family. In terms of assembly, interacts with ATP1B1. Detected in the brain only and specifically in neurons; expressed in multiple regions such as cerebral cortex, thalamus, cerebellum, olfactory bulb and brainstem, but not in the hippocampus.

It localises to the cell membrane. The polypeptide is Sodium/potassium-transporting ATPase subunit beta-1-interacting protein 2 (Nkain2) (Mus musculus (Mouse)).